The primary structure comprises 265 residues: 4-hydroxy-tetrahydrodipicolinate reductase (265 aa).

Residue 16–21 (GANGKM) participates in NAD(+) binding. NADP(+) is bound at residue R43. Residues 106–108 (GTT) and 130–133 (SENF) contribute to the NAD(+) site. H164 serves as the catalytic Proton donor/acceptor. Residue H165 participates in (S)-2,3,4,5-tetrahydrodipicolinate binding. K168 serves as the catalytic Proton donor. (S)-2,3,4,5-tetrahydrodipicolinate is bound at residue 174–175 (AT).

Belongs to the DapB family. Homotetramer.

The protein localises to the cytoplasm. The enzyme catalyses (S)-2,3,4,5-tetrahydrodipicolinate + NAD(+) + H2O = (2S,4S)-4-hydroxy-2,3,4,5-tetrahydrodipicolinate + NADH + H(+). It carries out the reaction (S)-2,3,4,5-tetrahydrodipicolinate + NADP(+) + H2O = (2S,4S)-4-hydroxy-2,3,4,5-tetrahydrodipicolinate + NADPH + H(+). It participates in amino-acid biosynthesis; L-lysine biosynthesis via DAP pathway; (S)-tetrahydrodipicolinate from L-aspartate: step 4/4. Its function is as follows. Catalyzes the conversion of 4-hydroxy-tetrahydrodipicolinate (HTPA) to tetrahydrodipicolinate. This chain is 4-hydroxy-tetrahydrodipicolinate reductase, found in Wigglesworthia glossinidia brevipalpis.